The following is a 199-amino-acid chain: Segregation and condensation protein B (199 aa).

It belongs to the ScpB family. In terms of assembly, homodimer. Homodimerization may be required to stabilize the binding of ScpA to the Smc head domains. Component of a cohesin-like complex composed of ScpA, ScpB and the Smc homodimer, in which ScpA and ScpB bind to the head domain of Smc. The presence of the three proteins is required for the association of the complex with DNA.

Its subcellular location is the cytoplasm. Functionally, participates in chromosomal partition during cell division. May act via the formation of a condensin-like complex containing Smc and ScpA that pull DNA away from mid-cell into both cell halves. The protein is Segregation and condensation protein B of Leuconostoc mesenteroides subsp. mesenteroides (strain ATCC 8293 / DSM 20343 / BCRC 11652 / CCM 1803 / JCM 6124 / NCDO 523 / NBRC 100496 / NCIMB 8023 / NCTC 12954 / NRRL B-1118 / 37Y).